We begin with the raw amino-acid sequence, 138 residues long: Translation initiation factor 5A (138 aa).

Position 37 is a hypusine (Lys37).

The protein belongs to the eIF-5A family.

It is found in the cytoplasm. Its function is as follows. Functions by promoting the formation of the first peptide bond. This is Translation initiation factor 5A from Pyrococcus furiosus (strain ATCC 43587 / DSM 3638 / JCM 8422 / Vc1).